Consider the following 257-residue polypeptide: 5'-nucleotidase SurE (257 aa).

Residues aspartate 8, aspartate 9, serine 40, and asparagine 97 each contribute to the a divalent metal cation site.

It belongs to the SurE nucleotidase family. Requires a divalent metal cation as cofactor.

The protein resides in the cytoplasm. The enzyme catalyses a ribonucleoside 5'-phosphate + H2O = a ribonucleoside + phosphate. Its function is as follows. Nucleotidase that shows phosphatase activity on nucleoside 5'-monophosphates. This chain is 5'-nucleotidase SurE, found in Desulforudis audaxviator (strain MP104C).